The following is a 386-amino-acid chain: MATTKSVLVLFFMILATTSSTCATLGEMVTVLSIDGGGIKGIIPATILEFLEGQLQEVDNNKDARLADYFDVIGGTSTGGLLTAMITTPNENNRPFAAAKDIVPFYFEHGPHIFNSSGSIFGPMYDGKYFLQVLQEKLGETRVHQALTEVAISSFDIKTNKPVIFTKSNLAKSPELDAKMYDICYSTAAAPTYFPPHYFVTHTSNGDKYEFNLVDGAVATVGDPALLSLSVATKLAQVDPKFASIKSLNYKQMLLLSLGTGTNSEFDKTYTAEEAAKWGPLRWILAIQQMTNAASSYMTDYYLSTVFQARHSQNNYLRVQENALTGTTTEMDDASEANMELLVQVGEKLLKKPVSKDSPETYEEALKRFAKLLSDRKKLRANKASY.

Positions 1-23 (MATTKSVLVLFFMILATTSSTCA) are cleaved as a signal peptide. Residues 32–229 (LSIDGGGIKG…TVGDPALLSL (198 aa)) enclose the PNPLA domain. The GXGXXG motif lies at 36-41 (GGGIKG). The short motif at 75–79 (GTSTG) is the GXSXG element. Residue serine 77 is the Nucleophile of the active site. An N-linked (GlcNAc...) asparagine glycan is attached at asparagine 115. Aspartate 215 functions as the Proton acceptor in the catalytic mechanism. The short motif at 215 to 217 (DGA) is the DGA/G element. A coiled-coil region spans residues 321–384 (ENALTGTTTE…DRKKLRANKA (64 aa)).

This sequence belongs to the patatin family. Tuber.

The protein resides in the vacuole. Probable lipolytic acyl hydrolase (LAH), an activity which is thought to be involved in the response of tubers to pathogens. The polypeptide is Patatin-2-Kuras 3 (pat2-k3) (Solanum tuberosum (Potato)).